The primary structure comprises 208 residues: Ras-related protein Rab-6A (208 aa).

Residue Ser2 is modified to N-acetylserine. Residues Ser23, Val24, Gly25, Lys26, Thr27, Ser28, Asp39, Asn40, Tyr42, and Thr45 each coordinate GTP. Thr27 is a Mg(2+) binding site. Positions 32–50 (RFMYDSFDNTYQATIGIDF) match the Switch 1 motif. The Mg(2+) site is built by Thr45 and Asp68. A Switch 2 motif is present at residues 69 to 88 (TAGQERFRSLIPSYIRDSAA). GTP is bound by residues Gly71, Asn126, Lys127, Asp129, Ser156, Ala157, and Lys158. S-geranylgeranyl cysteine attachment occurs at residues Cys206 and Cys208. Cys208 carries the post-translational modification Cysteine methyl ester.

Belongs to the small GTPase superfamily. Rab family. Requires Mg(2+) as cofactor.

The protein resides in the golgi apparatus membrane. The enzyme catalyses GTP + H2O = GDP + phosphate + H(+). Regulated by guanine nucleotide exchange factors (GEFs) which promote the exchange of bound GDP for free GTP. Regulated by GTPase activating proteins (GAPs) which increase the GTP hydrolysis activity. Inhibited by GDP dissociation inhibitors (GDIs). Functionally, the small GTPases Rab are key regulators of intracellular membrane trafficking, from the formation of transport vesicles to their fusion with membranes. Rabs cycle between an inactive GDP-bound form and an active GTP-bound form that is able to recruit to membranes different sets of downstream effectors directly responsible for vesicle formation, movement, tethering and fusion. RAB6A acts as a regulator of COPI-independent retrograde transport from the Golgi apparatus towards the endoplasmic reticulum (ER). The polypeptide is Ras-related protein Rab-6A (RAB6A) (Gallus gallus (Chicken)).